The following is a 662-amino-acid chain: uncharacterized protein (662 aa).

Disordered regions lie at residues 1–94 (MSQR…NENN), 107–237 (DHNN…VKYH), 288–328 (ETTS…TPSA), 406–440 (QSSF…PIQM), and 506–580 (QNSI…MVSP). Low complexity predominate over residues 25 to 49 (TTTTTPTPTTTTTTTSSLSSSTSST). Basic and acidic residues predominate over residues 77 to 87 (DNIKLDNEKTF). The segment covering 109–161 (NNNNNNNNNNNNNNNNNNNNNNNNNNNNNNNNNNNNNNNNNNNNNNNNNNNNN) has biased composition (low complexity). Residues 162 to 176 (DTQKGTNKNENNCTD) show a composition bias toward polar residues. Positions 183–196 (STSTTSSSETGSST) are enriched in low complexity. The span at 203-212 (KTPQSCLKKS) shows a compositional bias: polar residues. Residues 213–224 (NNNNNDNNNNNN) are compositionally biased toward low complexity. A compositionally biased stretch (basic residues) spans 226–235 (KTPRSTKKVK). Low complexity-rich tracts occupy residues 288–308 (ETTS…TPIP), 413–434 (PTNN…TTTP), 515–526 (PTKSSSSTSIQQ), and 535–575 (NINN…NNNN).

This is an uncharacterized protein from Dictyostelium discoideum (Social amoeba).